An 837-amino-acid polypeptide reads, in one-letter code: Tuftelin-interacting protein 11 (837 aa).

Basic and acidic residues-rich tracts occupy residues methionine 1–arginine 13 and valine 53–proline 64. Disordered stretches follow at residues methionine 1–arginine 21, valine 53–arginine 72, and leucine 85–alanine 133. Residues methionine 1–threonine 50 are required for interaction with DHX15. 3 positions are modified to phosphoserine: serine 2, serine 59, and serine 98. The span at glutamate 91–glutamate 102 shows a compositional bias: acidic residues. Residues lysine 103–proline 116 are compositionally biased toward basic and acidic residues. Serine 144 is subject to Phosphoserine. The G-patch domain occupies threonine 149–serine 195. The disordered stretch occupies residues isoleucine 179–proline 236. Serine 210 bears the Phosphoserine mark. The span at glutamate 217–glycine 231 shows a compositional bias: basic and acidic residues. The short motif at valine 700–asparagine 705 is the Nuclear localization signal element. Residues isoleucine 710–leucine 734 are required for nuclear speckle localization.

It belongs to the TFP11/STIP family. In terms of assembly, identified in the spliceosome C complex. Found in the Intron Large (IL) complex, a post-mRNA release spliceosomal complex containing the excised intron, U2, U5 and U6 snRNPs, and splicing factors. Interacts with TUFT1. Interacts with DHX15; indicative for a recruitment of DHX15 to the IL complex. Interacts with GCFC2.

Its subcellular location is the cytoplasm. The protein resides in the nucleus. Functionally, involved in pre-mRNA splicing, specifically in spliceosome disassembly during late-stage splicing events. Intron turnover seems to proceed through reactions in two lariat-intron associated complexes termed Intron Large (IL) and Intron Small (IS). In cooperation with DHX15 seems to mediate the transition of the U2, U5 and U6 snRNP-containing IL complex to the snRNP-free IS complex leading to efficient debranching and turnover of excised introns. May play a role in the differentiation of ameloblasts and odontoblasts or in the forming of the enamel extracellular matrix. This Pongo abelii (Sumatran orangutan) protein is Tuftelin-interacting protein 11 (TFIP11).